The following is a 604-amino-acid chain: Cell division cycle protein CDT1 (604 aa).

This sequence belongs to the Cdt1 family. As to quaternary structure, associates with the MCM2-7 complex. Interacts with MCM2, ORC1, ORC2 and ORC6.

The protein resides in the cytoplasm. Its subcellular location is the nucleus. In terms of biological role, DNA replication licensing factor, required for pre-replication complex assembly. Faithful duplication of the genetic material requires 'once per cell cycle' DNA replication initiation and elongation. Central to this control is the tightly regulated formation of prereplicative complexes (preRCs) at future origins of DNA replication. Required for the recruitment of the MCM2-7 helicase complex to the replication origins. The protein is Cell division cycle protein CDT1 (TAH11) of Saccharomyces cerevisiae (strain ATCC 204508 / S288c) (Baker's yeast).